The sequence spans 353 residues: MTIALGKFTKDEKDLFDIMDDWLRRDRFVFVGWSGLLLFPCAYFALGGWFTGTTFVTSWYTHGLASSYLEGCNFLTAAVSTPANSLAHSLLLLWGPEAQGDFTRWCQLGGLWTFVALHGAFALIGFMLRQFELARSVQLRPYNAIAFSGPIAVFVSVFLIYPLGQSGWFFAPSFGVAAIFRFILFFQGFHNWTLNPFHMMGVAGVLGAALLCAIHGATVENTLFEDGDGANTFRAFNPTQAEETYSMVTANRFWSQIFGVAFSNKRWLHFFMLFVPVTGLWMSALGVVGLALNLRAYDFVSQEIRAAEDPEFETFYTKNILLNEGIRAWMAAQDQPHENLIFPEEVLPRGNAL.

Position 2 is an N-acetylthreonine (T2). T2 bears the Phosphothreonine mark. The helical transmembrane segment at 41–61 (CAYFALGGWFTGTTFVTSWYT) threads the bilayer. A chlorophyll a-binding site is contributed by H118. The helical transmembrane segment at 125-141 (GFMLRQFELARSVQLRP) threads the bilayer. Pheophytin a is bound by residues Q130 and N143. The helical transmembrane segment at 153–166 (VFVSVFLIYPLGQS) threads the bilayer. H198 serves as a coordination point for chlorophyll a. The chain crosses the membrane as a helical span at residues 208–228 (AALLCAIHGATVENTLFEDGD). Residues H215 and F262 each coordinate a plastoquinone. H215 contributes to the Fe cation binding site. H269 contributes to the Fe cation binding site. Residues 279-295 (GLWMSALGVVGLALNLR) form a helical membrane-spanning segment.

It belongs to the reaction center PufL/M/PsbA/D family. PSII is composed of 1 copy each of membrane proteins PsbA, PsbB, PsbC, PsbD, PsbE, PsbF, PsbH, PsbI, PsbJ, PsbK, PsbL, PsbM, PsbT, PsbX, PsbY, PsbZ, Psb30/Ycf12, at least 3 peripheral proteins of the oxygen-evolving complex and a large number of cofactors. It forms dimeric complexes. The D1/D2 heterodimer binds P680, chlorophylls that are the primary electron donor of PSII, and subsequent electron acceptors. It shares a non-heme iron and each subunit binds pheophytin, quinone, additional chlorophylls, carotenoids and lipids. There is also a Cl(-1) ion associated with D1 and D2, which is required for oxygen evolution. The PSII complex binds additional chlorophylls, carotenoids and specific lipids. serves as cofactor.

It is found in the plastid. The protein localises to the chloroplast thylakoid membrane. The enzyme catalyses 2 a plastoquinone + 4 hnu + 2 H2O = 2 a plastoquinol + O2. Photosystem II (PSII) is a light-driven water:plastoquinone oxidoreductase that uses light energy to abstract electrons from H(2)O, generating O(2) and a proton gradient subsequently used for ATP formation. It consists of a core antenna complex that captures photons, and an electron transfer chain that converts photonic excitation into a charge separation. The D1/D2 (PsbA/PsbD) reaction center heterodimer binds P680, the primary electron donor of PSII as well as several subsequent electron acceptors. D2 is needed for assembly of a stable PSII complex. This is Photosystem II D2 protein from Olimarabidopsis pumila (Dwarf rocket).